The sequence spans 461 residues: GTPase Der (461 aa).

EngA-type G domains lie at 9-171 (KTIA…NLNK) and 200-371 (IQVG…ECFS). GTP is bound by residues 15–22 (GQPNVGKS), 62–66 (DTGGM), 123–126 (NKID), 206–213 (GRVNVGKS), 253–257 (DTAGI), and 317–320 (NKWD). Positions 372 to 456 (KRIPTSLLNS…PLILNAKDKK (85 aa)) constitute a KH-like domain.

It belongs to the TRAFAC class TrmE-Era-EngA-EngB-Septin-like GTPase superfamily. EngA (Der) GTPase family. Associates with the 50S ribosomal subunit.

Functionally, GTPase that plays an essential role in the late steps of ribosome biogenesis. The protein is GTPase Der of Helicobacter pylori (strain HPAG1).